A 325-amino-acid chain; its full sequence is Small ribosomal subunit protein RACK1 (325 aa).

WD repeat units lie at residues glutamine 5–aspartate 48, isoleucine 58–asparagine 99, glutamine 100–leucine 141, glutamine 143–glycine 186, asparagine 187–leucine 227, asparagine 228–glutamate 268, and aspartate 269–serine 320.

The protein belongs to the WD repeat G protein beta family. Ribosomal protein RACK1 subfamily.

Functionally, required for the expression of antimicrobial peptide nlp-29 in response to fungal infection or physical injury. The chain is Small ribosomal subunit protein RACK1 (rack-1) from Caenorhabditis elegans.